The primary structure comprises 263 residues: Trem-like transcript 4 protein (263 aa).

Residues 1–28 form the signal peptide; it reads MAWRYSQLLLVPVQLVFLASVCCPGVWG. The region spanning 29–132 is the Ig-like V-type domain; that stretch reads STVSEELHRM…LREVTVLRNI (104 aa). At 29-200 the chain is on the extracellular side; that stretch reads STVSEELHRM…GWTSPGLLVS (172 aa). Cysteine 47 and cysteine 116 are joined by a disulfide. An N-linked (GlcNAc...) asparagine glycan is attached at asparagine 100. The segment at 168–191 is disordered; the sequence is SPEETTDSSINGTGHRNQSSSSPG. A helical transmembrane segment spans residues 201 to 221; it reads VQYGLLLLKALMLSVFCVLLC. Over 222 to 263 the chain is Cytoplasmic; it reads WRSGQGREYMAETMELSKLPHISKSLDTVSHISGYEKKANWY.

In terms of assembly, interacts with TYROBP/DAP12. In terms of tissue distribution, predominantly expressed in spleen, with highest levels on selected populations of macrophages, including red pulp macrophages, and on subsets of dendritic cells (DC), mostly on CD8alpha(+) DC (at protein level). Also expressed on blood and spleen Ly6C(low) monocytes (at protein level). Not expressed on lymphocytes or granulocytes (at protein level).

Its subcellular location is the cell membrane. Positively regulates Toll-like receptor signaling via TLR7, TLR9 and TLR13 in neutrophils and splenic macrophages. Regulates TLR7 signaling by controlling ligand-induced recruitment of TLR7 from the endoplasmic reticulum to endosomes and lysosomes. Positively regulates Toll-like receptor TLR9-induced production of inflammatory cytokines but is dispensable for IFNB1 production. Involved in the anti-viral response to several viruses including influenza virus, vesicular stomatitis virus and cytomegalovirus. Binds to late apoptotic, and necrotic cells, but not living or early apoptotic cells, but is not essential for uptake of dying cells by dendritic cells (DCs). Does not bind nucleic acids. May participate in antigen presentation. The sequence is that of Trem-like transcript 4 protein (Treml4) from Mus musculus (Mouse).